The sequence spans 398 residues: NADH-ubiquinone oxidoreductase 49 kDa subunit (398 aa).

The protein belongs to the complex I 49 kDa subunit family.

It localises to the mitochondrion. It carries out the reaction a ubiquinone + NADH + 5 H(+)(in) = a ubiquinol + NAD(+) + 4 H(+)(out). Core subunit of the mitochondrial membrane respiratory chain NADH dehydrogenase (Complex I) that is believed to belong to the minimal assembly required for catalysis. Complex I functions in the transfer of electrons from NADH to the respiratory chain. The immediate electron acceptor for the enzyme is believed to be ubiquinone. Component of the iron-sulfur (IP) fragment of the enzyme. Component of the iron-sulfur (IP) fragment of the enzyme. The sequence is that of NADH-ubiquinone oxidoreductase 49 kDa subunit (NAD7) from Pylaiella littoralis (Seaweed).